The sequence spans 504 residues: 5-epiaristolochene 1,3-dihydroxylase (504 aa).

Residues 2-22 form a helical membrane-spanning segment; that stretch reads QFFSLVSIFLFLSFLFLLRKW. C442 is a binding site for heme.

This sequence belongs to the cytochrome P450 family. The cofactor is heme.

The protein localises to the membrane. It catalyses the reaction (+)-5-epi-aristolochene + 2 reduced [NADPH--hemoprotein reductase] + 2 O2 = capsidiol + 2 oxidized [NADPH--hemoprotein reductase] + 2 H2O + 2 H(+). Inhibited by ancymidol and ketoconazole. In terms of biological role, involved in the biosynthesis of capsidiol. Catalyzes the successive and independent hydroxylations at the C1 and C3 positions of 5-epiaristolochene. The second hydroxylation step is 8-fold more efficient than the first hydroxylation reaction. Capable of utilizing premnaspirodiene as a substrate. The chain is 5-epiaristolochene 1,3-dihydroxylase (CYP71D20) from Nicotiana tabacum (Common tobacco).